The chain runs to 309 residues: Taste receptor type 2 member 45 (309 aa).

Position 1 (Met1) is a topological domain, extracellular. The chain crosses the membrane as a helical span at residues Ile2–Phe22. The Cytoplasmic portion of the chain corresponds to Ala23–Arg55. A helical membrane pass occupies residues Val56 to Tyr76. Residues Ser77–Leu98 are Extracellular-facing. Residues Ala99 to Leu119 form a helical membrane-spanning segment. Over His120–Lys126 the chain is Cytoplasmic. Residues Ser127 to Val147 traverse the membrane as a helical segment. At Asn148 to Thr178 the chain is on the extracellular side. N-linked (GlcNAc...) asparagine glycosylation is present at Asn161. The helical transmembrane segment at Val179–Val199 threads the bilayer. At Cys200 to Gln229 the chain is on the cytoplasmic side. Residues Thr230–Trp250 form a helical membrane-spanning segment. At Ser251–Pro259 the chain is on the extracellular side. A helical transmembrane segment spans residues Val260 to Ile280. Topologically, residues Trp281–Ser309 are cytoplasmic.

Belongs to the G-protein coupled receptor T2R family.

The protein localises to the membrane. Receptor that may play a role in the perception of bitterness and is gustducin-linked. May play a role in sensing the chemical composition of the gastrointestinal content. The activity of this receptor may stimulate alpha gustducin, mediate PLC-beta-2 activation and lead to the gating of TRPM5. The sequence is that of Taste receptor type 2 member 45 (TAS2R45) from Pan paniscus (Pygmy chimpanzee).